A 313-amino-acid chain; its full sequence is Testis-expressed protein 264 (313 aa).

At 1 to 6 the chain is on the lumenal side; it reads MSDLLL. Residues 7-31 form a helical; Signal-anchor for type III membrane protein membrane-spanning segment; that stretch reads LGLIGGLTLLLLLTLLAFAGYSGLL. Over 32–313 the chain is Cytoplasmic; that stretch reads AGVEVSAGSP…EPTAPEKGKE (282 aa). The tract at residues 193 to 313 is disordered; sequence PEMKETEWKW…EPTAPEKGKE (121 aa). Residues 219–247 are compositionally biased toward polar residues; it reads DTMSDTSSVSLEVSPGSRETSAATLSPGA. Ser239 and Ser244 each carry phosphoserine. The segment covering 251–263 has biased composition (basic and acidic residues); sequence GWDDGDTRSEHSY. A compositionally biased stretch (low complexity) spans 264–273; the sequence is SESGASGSSF. The LIR motif motif lies at 273 to 276; that stretch reads FEEL.

In terms of assembly, interacts (via the LIR motif) with ATG8 family proteins MAP1LC3A, MAP1LC3B, GABARAP and GABARAPL1. Interacts with VCP/p97; bridging VCP/p97 to covalent DNA-protein cross-links (DPCs). Interacts with TOP1 (when sumoylated).

Its subcellular location is the endoplasmic reticulum membrane. It localises to the cytoplasmic vesicle. It is found in the autophagosome. The protein localises to the cytoplasm. The protein resides in the cytosol. Its subcellular location is the nucleus. It localises to the chromosome. Functionally, major reticulophagy (also called ER-phagy) receptor that acts independently of other candidate reticulophagy receptors to remodel subdomains of the endoplasmic reticulum into autophagosomes upon nutrient stress, which then fuse with lysosomes for endoplasmic reticulum turnover. The ATG8-containing isolation membrane (IM) cradles a tubular segment of TEX264-positive ER near a three-way junction, allowing the formation of a synapse of 2 juxtaposed membranes with trans interaction between the TEX264 and ATG8 proteins. Expansion of the IM would extend the capture of ER, possibly through a 'zipper-like' process involving continued trans TEX264-ATG8 interactions, until poorly understood mechanisms lead to the fission of relevant membranes and, ultimately, autophagosomal membrane closure. Also involved in the repair of covalent DNA-protein cross-links (DPCs) during DNA synthesis: acts by bridging VCP/p97 to covalent DNA-protein cross-links (DPCs) and initiating resolution of DPCs by SPRTN. The polypeptide is Testis-expressed protein 264 (Homo sapiens (Human)).